Reading from the N-terminus, the 107-residue chain is MMKVLVVFALLVTLISYSSSEGIDDLEADELLSLMANEQTRKECIPKHHECTSNKHGCCRGNFFKYKCQCTTVVTQDGEQTERCFCGTPPHHKAAELVVGFGKKIFG.

The signal sequence occupies residues Met-1 to Ser-20. Positions Glu-21–Arg-41 are excised as a propeptide. 4 disulfides stabilise this stretch: Cys-44–Cys-59, Cys-51–Cys-68, Cys-58–Cys-86, and Cys-70–Cys-84.

Belongs to the neurotoxin 19 (CSTX) family. 04 (U1-Lctx) subfamily. As to expression, expressed by the venom gland.

Its subcellular location is the secreted. The polypeptide is U1-lycotoxin-Ls1b (Lycosa singoriensis (Wolf spider)).